The primary structure comprises 579 residues: Glycine--tRNA ligase (579 aa).

E175 contacts glycine. ATP is bound by residues 207-209 (RNE) and 218-219 (RV). Residue E226 participates in glycine binding. ATP is bound at residue 327-328 (EC). Position 442–444 (442–444 (EPS)) interacts with glycine. R449 serves as a coordination point for ATP.

It belongs to the class-II aminoacyl-tRNA synthetase family. Homodimer.

It carries out the reaction tRNA(Gly) + glycine + ATP = glycyl-tRNA(Gly) + AMP + diphosphate. The catalysed reaction is 2 ATP + H(+) = P(1),P(4)-bis(5'-adenosyl) tetraphosphate + diphosphate. Catalyzes the ATP-dependent ligation of glycine to the 3'-end of its cognate tRNA, via the formation of an aminoacyl-adenylate intermediate (Gly-AMP). Also produces diadenosine tetraphosphate (Ap4A), a universal pleiotropic signaling molecule needed for cell regulation pathways, by direct condensation of 2 ATPs. Thereby, may play a special role in Ap4A homeostasis. This chain is Glycine--tRNA ligase, found in Encephalitozoon cuniculi (strain GB-M1) (Microsporidian parasite).